The following is a 1038-amino-acid chain: Ras GTPase-activating protein 1 (1038 aa).

N-acetylmethionine is present on M1. Low complexity predominate over residues M1–A16. Disordered stretches follow at residues M1 to T24 and E117 to G152. Positions G124–P135 are enriched in pro residues. In terms of domain architecture, SH2 1 spans W172 to V263. The SH3 domain maps to E270 to R332. The 91-residue stretch at W342–V432 folds into the SH2 2 domain. The PH domain maps to N465–S568. The C2 domain occupies S568–F681. Y606 carries the phosphotyrosine modification. Residues K755 to L965 form the Ras-GAP domain. Position 822 is a phosphoserine (S822).

As to quaternary structure, interacts with SQSTM1. Interacts with SPSB1; the interaction does not promote degradation. Interacts with CAV2 (tyrosine phosphorylated form). Directly interacts with NCK1. Interacts with PDGFRB (tyrosine phosphorylated). Interacts (via SH2 domain) with the 'Tyr-9' phosphorylated form of PDPK1. Interacts with tyrosine-phosphorylated EPHB4. Post-translationally, phosphorylated by SRC and LCK. The phosphorylation SRC inhibits its ability to stimulate the Ras-GTPase activity, whereas phosphorylation by LCK does not display any effect on stimulation activity.

The protein resides in the cytoplasm. In terms of biological role, inhibitory regulator of the Ras-cyclic AMP pathway. Stimulates the GTPase of normal but not oncogenic Ras p21. The chain is Ras GTPase-activating protein 1 (Rasa1) from Rattus norvegicus (Rat).